Reading from the N-terminus, the 160-residue chain is MASLTHLDATGAANMVDVSDKAATARTARAEGAIVMRPETLRLIREGDAKKGDVLGTARLAGIMAAKRTHDLIPLCHPLLLSKVRVECEPDAALPGIRITAEVRVQGPTGVEMEALTAVSVACLTVYDMVKAADRGMRIEGIRLLEKSGGRSGSYAADPA.

Substrate-binding positions include 75-77 (LCH) and 113-114 (ME). The active site involves Asp-128.

Belongs to the MoaC family. As to quaternary structure, homohexamer; trimer of dimers.

The catalysed reaction is (8S)-3',8-cyclo-7,8-dihydroguanosine 5'-triphosphate = cyclic pyranopterin phosphate + diphosphate. Its pathway is cofactor biosynthesis; molybdopterin biosynthesis. Its function is as follows. Catalyzes the conversion of (8S)-3',8-cyclo-7,8-dihydroguanosine 5'-triphosphate to cyclic pyranopterin monophosphate (cPMP). This is Cyclic pyranopterin monophosphate synthase from Methylobacterium sp. (strain 4-46).